A 68-amino-acid chain; its full sequence is Conotoxin Cal12.1p1 (68 aa).

Positions 1 to 23 (DLITNSYTRGKPRHVTSWRNLRT) are excised as a propeptide.

Post-translationally, contains 4 disulfide bonds. As to expression, expressed by the venom duct.

The protein resides in the secreted. The protein is Conotoxin Cal12.1p1 of Californiconus californicus (California cone).